The following is a 438-amino-acid chain: Nudix hydrolase 19, chloroplastic (438 aa).

A chloroplast-targeting transit peptide spans 1–36 (MLALFLSSSSYPTLSFLSRSVTLNLARTTTLSALTM). Zn(2+) is bound by residues cysteine 212, cysteine 215, cysteine 230, and cysteine 235. Substrate is bound by residues tyrosine 240, 276-278 (AGF), glutamate 292, glutamate 296, and glutamate 342. A Nudix hydrolase domain is found at 241–371 (PRVDPVVIML…EYRKAQRTAA (131 aa)). Mg(2+) is bound by residues alanine 276, glutamate 292, glutamate 296, and glutamate 342. The Nudix box signature appears at 277–298 (GFIEPGESLEEAVRRETWEETG). The Microbody targeting signal signature appears at 422–424 (PDD).

Belongs to the Nudix hydrolase family. NudC subfamily. Mg(2+) is required as a cofactor. The cofactor is Zn(2+). In terms of tissue distribution, expressed in roots, leaves, stems and inflorescences.

Its subcellular location is the plastid. It localises to the chloroplast. It carries out the reaction a 5'-end NAD(+)-phospho-ribonucleoside in mRNA + H2O = a 5'-end phospho-adenosine-phospho-ribonucleoside in mRNA + beta-nicotinamide D-ribonucleotide + 2 H(+). The enzyme catalyses NAD(+) + H2O = beta-nicotinamide D-ribonucleotide + AMP + 2 H(+). The catalysed reaction is NADH + H2O = reduced beta-nicotinamide D-ribonucleotide + AMP + 2 H(+). Its function is as follows. mRNA decapping enzyme that specifically removes the nicotinamide adenine dinucleotide (NAD) cap from a subset of mRNAs by hydrolyzing the diphosphate linkage to produce nicotinamide mononucleotide (NMN) and 5' monophosphate mRNA. The NAD-cap is present at the 5'-end of some RNAs; in contrast to the canonical N7 methylguanosine (m7G) cap, the NAD cap promotes mRNA decay. Mediates the hydrolysis of some nucleoside diphosphate derivatives. Has a high affinity for NADPH compared with that for NADH. This chain is Nudix hydrolase 19, chloroplastic (NUDT19), found in Arabidopsis thaliana (Mouse-ear cress).